The primary structure comprises 140 residues: Profilin-2 (140 aa).

Residue Ala-2 is modified to N-acetylalanine.

This sequence belongs to the profilin family. As to quaternary structure, occurs in many kinds of cells as a complex with monomeric actin in a 1:1 ratio. Interacts with PFN2. Interacts with ACTMAP (via N-terminus); the interaction may facilitate efficient cleavage of the acetylated N-terminus of immature actin by ACTMAP. As to expression, highly expressed in brain, skeletal muscle and kidney and less strongly in heart, placenta, lung and liver.

It localises to the cytoplasm. Its subcellular location is the cytoskeleton. Binds to actin and affects the structure of the cytoskeleton. At high concentrations, profilin prevents the polymerization of actin, whereas it enhances it at low concentrations. By binding to PIP2, it inhibits the formation of IP3 and DG. This is Profilin-2 (PFN2) from Homo sapiens (Human).